The primary structure comprises 562 residues: Ribonuclease Y (562 aa).

The helical transmembrane segment at 1–21 threads the bilayer; it reads MNMLYFVLALLVGLAGGFFVG. The segment at 108 to 129 is disordered; the sequence is AAQDAARERETLSADRQETRRE. One can recognise a KH domain in the interval 252–312; sequence SVSVVPIPND…VRREVARHVL (61 aa). Positions 378 to 471 constitute an HD domain; that stretch reads VLKHSVQVAH…VAAADAISAA (94 aa).

The protein belongs to the RNase Y family.

It localises to the cell membrane. Its function is as follows. Endoribonuclease that initiates mRNA decay. The sequence is that of Ribonuclease Y from Deinococcus geothermalis (strain DSM 11300 / CIP 105573 / AG-3a).